The chain runs to 685 residues: Heat shock protein homolog SSE1 (685 aa).

Residues 651-685 form a disordered region; it reads QALRSNQEASKMADLSAKLAAQRKAEAEAKENAKE. Positions 673–685 are enriched in basic and acidic residues; it reads RKAEAEAKENAKE.

This sequence belongs to the heat shock protein 70 family.

It is found in the cytoplasm. This Naumovozyma castellii (Yeast) protein is Heat shock protein homolog SSE1 (SSE1).